An 814-amino-acid chain; its full sequence is DNA gyrase subunit A (814 aa).

The region spanning 32-499 (LPDVRDGLKP…GVIEFREEDL (468 aa)) is the Topo IIA-type catalytic domain. The O-(5'-phospho-DNA)-tyrosine intermediate role is filled by tyrosine 120. Residues 526–532 (QHRAGRG) carry the GyrA-box motif.

Belongs to the type II topoisomerase GyrA/ParC subunit family. As to quaternary structure, heterotetramer, composed of two GyrA and two GyrB chains. In the heterotetramer, GyrA contains the active site tyrosine that forms a transient covalent intermediate with DNA, while GyrB binds cofactors and catalyzes ATP hydrolysis.

The protein resides in the cytoplasm. It carries out the reaction ATP-dependent breakage, passage and rejoining of double-stranded DNA.. Its function is as follows. A type II topoisomerase that negatively supercoils closed circular double-stranded (ds) DNA in an ATP-dependent manner to modulate DNA topology and maintain chromosomes in an underwound state. Negative supercoiling favors strand separation, and DNA replication, transcription, recombination and repair, all of which involve strand separation. Also able to catalyze the interconversion of other topological isomers of dsDNA rings, including catenanes and knotted rings. Type II topoisomerases break and join 2 DNA strands simultaneously in an ATP-dependent manner. This chain is DNA gyrase subunit A, found in Dehalogenimonas lykanthroporepellens (strain ATCC BAA-1523 / JCM 15061 / BL-DC-9).